The following is a 547-amino-acid chain: CDK5RAP1-like protein (547 aa).

Residues 79–194 (RTVCYVTYGC…LPRLVAVAAG (116 aa)) form the MTTase N-terminal domain. Cys88, Cys124, Cys157, Cys232, Cys236, and Cys239 together coordinate [4Fe-4S] cluster. Positions 218–475 (DSASKTAFIS…TTVFREEALK (258 aa)) constitute a Radical SAM core domain. Positions 478–543 (QALIGSEQTV…SQTLKAQLIG (66 aa)) constitute a TRAM domain.

It belongs to the methylthiotransferase family. MiaB subfamily. [4Fe-4S] cluster serves as cofactor.

Potential regulator of CDK5 activity. The protein is CDK5RAP1-like protein of Caenorhabditis elegans.